The sequence spans 725 residues: N-alpha-acetyltransferase 35, NatC auxiliary subunit (725 aa).

A Phosphoserine modification is found at serine 187. The tract at residues 548-573 (ERIMEEQQKGRSSKKTKKKKKVRPLS) is disordered. Residues 558 to 571 (RSSKKTKKKKKVRP) are compositionally biased toward basic residues.

The protein belongs to the MAK10 family. In terms of assembly, component of the N-terminal acetyltransferase C (NatC) complex, which is composed of NAA35, NAA38 and NAA30.

The protein localises to the cytoplasm. Functionally, auxillary component of the N-terminal acetyltransferase C (NatC) complex which catalyzes acetylation of N-terminal methionine residues. N-terminal acetylation protects proteins from ubiquitination and degradation by the N-end rule pathway. Involved in regulation of apoptosis and proliferation of smooth muscle cells. This Homo sapiens (Human) protein is N-alpha-acetyltransferase 35, NatC auxiliary subunit (NAA35).